Consider the following 477-residue polypeptide: Serine/threonine protein phosphatase 2A 55 kDa regulatory subunit B' delta isoform (477 aa).

This sequence belongs to the phosphatase 2A regulatory subunit B56 family. PP2A consists of a common heteromeric enzyme, composed of a catalytic subunit (subunits C), a constant regulatory subunit (subunit A), and a variety of regulatory subunits such as subunits B (the R2/B/PR55/B55, R3/B''/PR72/PR130/PR59 and R5/B'/B56 families). Interacts with SRK2E/OST1. As to expression, expressed ubiquitously.

It localises to the cytoplasm. Its function is as follows. The B regulatory subunit may modulate substrate selectivity and catalytic activity, and may also direct the localization of the catalytic enzyme to a particular subcellular compartment. This chain is Serine/threonine protein phosphatase 2A 55 kDa regulatory subunit B' delta isoform (B'DELTA), found in Arabidopsis thaliana (Mouse-ear cress).